Reading from the N-terminus, the 215-residue chain is Thymidylate kinase (215 aa).

13 to 20 (GLEGAGKS) contributes to the ATP binding site.

It belongs to the thymidylate kinase family.

The enzyme catalyses dTMP + ATP = dTDP + ADP. Phosphorylation of dTMP to form dTDP in both de novo and salvage pathways of dTTP synthesis. This Shewanella frigidimarina (strain NCIMB 400) protein is Thymidylate kinase.